A 306-amino-acid chain; its full sequence is GTPase IMAP family member 1 (306 aa).

The disordered stretch occupies residues 1–21 (MGGRKMATDEENVYGLEENAQ). Residues 1 to 272 (MGGRKMATDE…RLWKWLKSPR (272 aa)) are Cytoplasmic-facing. Positions 25–229 (ESTRRLILVG…YSNEVYELAQ (205 aa)) constitute an AIG1-type G domain. Residues 34–41 (GRTGAGKS) form a G1 region. GTP contacts are provided by residues 34-42 (GRTGAGKSA) and serine 55. Residues 61 to 65 (SVTRA) are G2. Positions 82-85 (DTPD) are G3. A G4 region spans residues 152 to 155 (TRKE). Residues 153–155 (RKE) and asparagine 190 each bind GTP. Residues 189–191 (DNR) are G5. Residues 273–292 (SWRLGLALLLGGALLFWVLL) traverse the membrane as a helical; Anchor for type IV membrane protein segment. Over 293–306 (HRRWSEAVAEVGPD) the chain is Lumenal.

The protein belongs to the TRAFAC class TrmE-Era-EngA-EngB-Septin-like GTPase superfamily. AIG1/Toc34/Toc159-like paraseptin GTPase family. IAN subfamily. As to expression, predominantly expressed in the spleen and to a lesser extent in the lymph nodes. Detected in T-cells.

Its subcellular location is the endoplasmic reticulum membrane. The protein resides in the golgi apparatus membrane. Its function is as follows. May regulate lymphocyte survival. Required for normal levels of mature T-lymphocytes and mature B-cells. The protein is GTPase IMAP family member 1 (GIMAP1) of Homo sapiens (Human).